The sequence spans 298 residues: Ribose-phosphate pyrophosphokinase (298 aa).

ATP contacts are provided by residues 33-35 (DGE) and 91-92 (RQ). H125 and D164 together coordinate Mg(2+). K187 is a catalytic residue. R189 and D224 together coordinate D-ribose 5-phosphate.

This sequence belongs to the ribose-phosphate pyrophosphokinase family. Class III (archaeal) subfamily. Requires Mg(2+) as cofactor.

It is found in the cytoplasm. It carries out the reaction D-ribose 5-phosphate + ATP = 5-phospho-alpha-D-ribose 1-diphosphate + AMP + H(+). Its pathway is metabolic intermediate biosynthesis; 5-phospho-alpha-D-ribose 1-diphosphate biosynthesis; 5-phospho-alpha-D-ribose 1-diphosphate from D-ribose 5-phosphate (route I): step 1/1. In terms of biological role, involved in the biosynthesis of the central metabolite phospho-alpha-D-ribosyl-1-pyrophosphate (PRPP) via the transfer of pyrophosphoryl group from ATP to 1-hydroxyl of ribose-5-phosphate (Rib-5-P). The protein is Ribose-phosphate pyrophosphokinase of Methanobrevibacter smithii (strain ATCC 35061 / DSM 861 / OCM 144 / PS).